Consider the following 20-residue polypeptide: Flagellar filament 33 kDa core protein (20 aa).

The protein belongs to the bacterial flagellin family. The flagellum consists of an outer layer composed of repeating units of FlaA around a core that contains one or all of five antigenically related polypeptides.

The protein resides in the periplasmic flagellum. It is found in the periplasm. Its function is as follows. Component of the core of the flagella. This Spirochaeta aurantia protein is Flagellar filament 33 kDa core protein.